A 136-amino-acid chain; its full sequence is uncharacterized protein (136 aa).

This is an uncharacterized protein from Acheta domesticus (House cricket).